Consider the following 793-residue polypeptide: Splicing factor 3A subunit 1 (793 aa).

Residues 1 to 43 (MPAGPVQAVPPPPPVPTEPKQPTEEEASSKEDSAPSKPVVGII) are disordered. The span at 8 to 19 (AVPPPPPVPTEP) shows a compositional bias: pro residues. Lysine 20 is covalently cross-linked (Glycyl lysine isopeptide (Lys-Gly) (interchain with G-Cter in SUMO2)). The span at 21–34 (QPTEEEASSKEDSA) shows a compositional bias: basic and acidic residues. An SURP motif 1 repeat occupies 52 to 94 (IVDKTASFVARNGPEFEARIRQNEINNPKFNFLNPNDPYHAYY). Lysine 55 carries the N6-acetyllysine modification. Residue lysine 131 forms a Glycyl lysine isopeptide (Lys-Gly) (interchain with G-Cter in SUMO2) linkage. One copy of the SURP motif 2 repeat lies at 166–208 (VVKLTAQFVARNGRQFLTQLMQKEQRNYQFDFLRPQHSLFNYF). The segment at 318 to 428 (GESEEVEMEV…KIPASKMQEH (111 aa)) is disordered. Phosphoserine is present on residues serine 320, serine 329, and serine 359. 2 stretches are compositionally biased toward acidic residues: residues 320–334 (SEEV…EEDD) and 354–364 (DMDEGSDDEEE). Residues 368–384 (VPPPPETPMPPPLPPTP) show a composition bias toward pro residues. Residues 388-397 (IVRKDYDPKA) are compositionally biased toward basic and acidic residues. Position 413 is a phosphoserine (serine 413). Lysine 424 is covalently cross-linked (Glycyl lysine isopeptide (Lys-Gly) (interchain with G-Cter in SUMO2)). At serine 451 the chain carries Phosphoserine. Phosphotyrosine is present on tyrosine 456. The segment covering 488–502 (IGEEEIQKPEEKVTW) has biased composition (basic and acidic residues). 3 disordered regions span residues 488-518 (IGEE…AAQA), 530-584 (HKAK…TMPP), and 665-688 (APMP…LKTE). Lysine 499 participates in a covalent cross-link: Glycyl lysine isopeptide (Lys-Gly) (interchain with G-Cter in SUMO2). Residue serine 508 is modified to Phosphoserine. Residues 509 to 518 (MARTQQAAQA) show a composition bias toward polar residues. A Glycyl lysine isopeptide (Lys-Gly) (interchain with G-Cter in SUMO2) cross-link involves residue lysine 542. Residues 665–675 (APMPPVHPPPP) are compositionally biased toward pro residues. Residues 680–702 (PTSKKLKTEDSLMPEEEFLRRNK) are required and sufficient for nuclear import. Lysine 686 is covalently cross-linked (Glycyl lysine isopeptide (Lys-Gly) (interchain with G-Cter in SUMO2)). A Ubiquitin-like domain is found at 707 to 793 (IKVQVPNMQD…ALKERGGRKK (87 aa)). Tyrosine 759 is subject to Phosphotyrosine.

In terms of assembly, component of the 17S U2 SnRNP complex, a ribonucleoprotein complex that contains small nuclear RNA (snRNA) U2 and a number of specific proteins. Part of the SF3A subcomplex of the 17S U2 SnRNP complex which is composed of three subunits; SF3A3/SAP61, SF3A2/SAP62 and SF3A1/SAP114. SF3A associates with the splicing factor SF3B and a 12S RNA unit to form the mature 17S U2 small nuclear ribonucleoprotein complex (17S U2 snRNP). SF3A1 functions as a scaffold that interacts directly with both SF3A2 and SF3A3. Identified in the spliceosome 'E' complex, a precursor of the spliceosome 'A' complex. Identified in the spliceosome 'A' and 'B' complexes. Identified in the spliceosome 'C' complex. Interacts with P2RX6; resulting in a reduction of the splicing activity. In terms of tissue distribution, ubiquitously expressed.

The protein localises to the nucleus. It localises to the nucleus speckle. Component of the 17S U2 SnRNP complex of the spliceosome, a large ribonucleoprotein complex that removes introns from transcribed pre-mRNAs. The 17S U2 SnRNP complex (1) directly participates in early spliceosome assembly and (2) mediates recognition of the intron branch site during pre-mRNA splicing by promoting the selection of the pre-mRNA branch-site adenosine, the nucleophile for the first step of splicing. Within the 17S U2 SnRNP complex, SF3A1 is part of the SF3A subcomplex that contributes to the assembly of the 17S U2 snRNP, and the subsequent assembly of the pre-spliceosome 'E' complex and the pre-catalytic spliceosome 'A' complex. Involved in pre-mRNA splicing as a component of pre-catalytic spliceosome 'B' complexes. The polypeptide is Splicing factor 3A subunit 1 (SF3A1) (Homo sapiens (Human)).